A 322-amino-acid chain; its full sequence is Germ cell-specific gene 1-like protein (322 aa).

At 1–8 the chain is on the cytoplasmic side; it reads MKTSRRGR. A helical transmembrane segment spans residues 9–29; it reads ALLAVALNLLALLFATTAFLT. Over 30–122 the chain is Extracellular; the sequence is TYWCQGTQRV…FIDLAPASEK (93 aa). Residues 123–143 traverse the membrane as a helical segment; the sequence is GVLWLSVVSEVLYILLLVVGF. Residues 144 to 163 lie on the Cytoplasmic side of the membrane; it reads SLMCLELLHSSSVIDGLKLN. Residues 164–184 form a helical membrane-spanning segment; it reads AFAAVFTVLSGLLGMVAHMMY. Over 185-207 the chain is Extracellular; it reads TQVFQVTVSLGPEDWRPHSWDYG. The helical transmembrane segment at 208 to 228 threads the bilayer; it reads WSFCLAWGSFTCCMAASVTTL. Residues 229–322 lie on the Cytoplasmic side of the membrane; that stretch reads NSYTKTVIEF…RQCWVLGHWV (94 aa). At Ser274 the chain carries Phosphoserine.

The protein belongs to the GSG1 family. Component of the inner core of AMPAR complexes. AMPAR complexes consist of an inner core made of 4 pore-forming GluA/GRIA proteins (GRIA1, GRIA2, GRIA3 and GRIA4) and 4 major auxiliary subunits arranged in a twofold symmetry. One of the two pairs of distinct binding sites is occupied either by CNIH2, CNIH3 or CACNG2, CACNG3. The other harbors CACNG2, CACNG3, CACNG4, CACNG8 or GSG1L. This inner core of AMPAR complexes is complemented by outer core constituents binding directly to the GluA/GRIA proteins at sites distinct from the interaction sites of the inner core constituents. Outer core constituents include at least PRRT1, PRRT2, CKAMP44/SHISA9, FRRS1L and NRN1. The proteins of the inner and outer core serve as a platform for other, more peripherally associated AMPAR constituents. Alone or in combination, these auxiliary subunits control the gating and pharmacology of the AMPAR complexes and profoundly impact their biogenesis and protein processing. Expressed in the brain (at protein level).

Its subcellular location is the cell membrane. The protein resides in the synapse. Its function is as follows. As a component of the inner core of AMPAR complexes, modifies AMPA receptor (AMPAR) gating. The protein is Germ cell-specific gene 1-like protein (Gsg1l) of Rattus norvegicus (Rat).